Reading from the N-terminus, the 785-residue chain is Conserved oligomeric Golgi complex subunit 4 (785 aa).

The disordered stretch occupies residues 1–24 (MADLDSPPKLSGVQQPSEGVGGGR). Residue alanine 2 is modified to N-acetylalanine. The segment at 2 to 84 (ADLDSPPKLS…VTLHRMGPNL (83 aa)) is interaction with SCFD1. Serine 6 is subject to Phosphoserine. The tract at residues 85–153 (QLIEGDAKQL…TALRSEDYEQ (69 aa)) is interaction with STX5. A d domain region spans residues 618 to 740 (PQVQPWINSF…SQMATILNLE (123 aa)). The interval 741-785 (RVTEILDYWGPNSGPLTWRLTPAEVRQVLALRIDFRSEDIKRLRL) is e domain; essential for proper cell surface glycosylation.

It belongs to the COG4 family. Monomer. Component of the conserved oligomeric Golgi (COG) complex which is composed of eight different subunits and is required for normal Golgi morphology and localization. Mediates interaction of SCFD1 with the COG complex. Interacts with STX5.

Its subcellular location is the cytoplasm. It localises to the cytosol. It is found in the golgi apparatus membrane. In terms of biological role, required for normal Golgi function. Plays a role in SNARE-pin assembly and Golgi-to-ER retrograde transport via its interaction with SCFD1. This chain is Conserved oligomeric Golgi complex subunit 4 (COG4), found in Homo sapiens (Human).